Consider the following 617-residue polypeptide: Formin-binding protein 1 (617 aa).

A required for self-association and induction of membrane tubulation region spans residues 1–79; that stretch reads MSWGTELWDQ…CKAFISNLNE (79 aa). An F-BAR domain is found at 1 to 264; that stretch reads MSWGTELWDQ…AAESIDQKND (264 aa). An interaction with microtubules region spans residues 1–335; that stretch reads MSWGTELWDQ…KKNKLMSLLT (335 aa). N6-acetyllysine occurs at positions 66 and 110. The stretch at 67–259 forms a coiled coil; that stretch reads YTSCKAFISN…DGIVKAAESI (193 aa). A required for self-association and induction of membrane tubulation region spans residues 251–617; sequence GIVKAAESID…VCLDKNAKDS (367 aa). Disordered regions lie at residues 280–315 and 333–366; these read GDIE…KFGG and LLTS…QKEP. Phosphoserine is present on residues S296 and S299. Positions 338 to 347 are enriched in pro residues; sequence HQPPPPPPAS. Phosphoserine is present on residues S349 and S359. A coiled-coil region spans residues 398–490; that stretch reads TPEDFSNLPP…EVEGRLPARS (93 aa). Residues 400 to 552 are interaction with RND2; it reads EDFSNLPPEQ…FDDEEPLPAI (153 aa). The REM-1 domain occupies 404 to 481; it reads NLPPEQRRKK…TQKFEAWLAE (78 aa). The segment at 486–531 is disordered; sequence LPARSEQARRQSGLYDSQNPPTVNNCAQDRESPDGSYTEEQSQESE. The interaction with PDE6G stretch occupies residues 495 to 617; it reads RQSGLYDSQN…VCLDKNAKDS (123 aa). S497 carries the post-translational modification Phosphoserine. A compositionally biased stretch (polar residues) spans 499–512; it reads LYDSQNPPTVNNCA. Position 500 is a phosphotyrosine (Y500). The tract at residues 514 to 617 is required for interaction with TNKS; the sequence is DRESPDGSYT…VCLDKNAKDS (104 aa). Position 521 is a phosphoserine (S521). An interaction with DNM1 and DNM3 region spans residues 535-617; the sequence is LATDFDDEFD…VCLDKNAKDS (83 aa). The SH3 domain occupies 550–611; that stretch reads PAIGTCKALY…PTSYVEVCLD (62 aa). Residues 550-617 form an interaction with ARHGAP17, DAAM1, DIAPH1 and DIAPH2 region; the sequence is PAIGTCKALY…VCLDKNAKDS (68 aa). Positions 553–609 are interaction with DNM2 and WASL; that stretch reads GTCKALYTFEGQNEGTISVVEGETLYVIEEDKGDGWTRIRRNEDEEGYVPTSYVEVC. An interaction with FASLG region spans residues 553–610; the sequence is GTCKALYTFEGQNEGTISVVEGETLYVIEEDKGDGWTRIRRNEDEEGYVPTSYVEVCL.

This sequence belongs to the FNBP1 family. As to quaternary structure, interacts specifically with GTP-bound RND2 and CDC42. Interacts with PDE6G and microtubules. Homodimerizes, the dimers can polymerize end-to-end to form filamentous structures. Interacts with AKAP9, ARHGAP17, DAAM1, DIAPH1, DIAPH2, DNM1, DNM2, DNM3, FASLG/FASL, SNX2 and WASL/N-WASP. May interact with TNKS. Very highly expressed in the epithelial cells of the gastrointestinal tract, respiratory, reproductive and urinary systems. Also highly expressed in brown adipose tissue, cardiomyocytes, enteric ganglia and glucagon producing cells of the pancreas. Expressed in germ cells of the testis and all regions of the brain.

Its subcellular location is the cytoplasm. The protein localises to the cytoskeleton. It is found in the cell cortex. The protein resides in the lysosome. It localises to the cytoplasmic vesicle. Its subcellular location is the cell membrane. The protein localises to the membrane. It is found in the clathrin-coated pit. In terms of biological role, may act as a link between RND2 signaling and regulation of the actin cytoskeleton. Required to coordinate membrane tubulation with reorganization of the actin cytoskeleton during the late stage of clathrin-mediated endocytosis. Binds to lipids such as phosphatidylinositol 4,5-bisphosphate and phosphatidylserine and promotes membrane invagination and the formation of tubules. Also enhances actin polymerization via the recruitment of WASL/N-WASP, which in turn activates the Arp2/3 complex. Actin polymerization may promote the fission of membrane tubules to form endocytic vesicles. May be required for the lysosomal retention of FASLG/FASL. The polypeptide is Formin-binding protein 1 (FNBP1) (Homo sapiens (Human)).